The sequence spans 825 residues: NT-3 growth factor receptor (825 aa).

Positions 1–31 (MDVSLCPAKCSFWRIFLLGSVWLDYVGSVLA) are cleaved as a signal peptide. 2 disulfides stabilise this stretch: Cys32/Cys38 and Cys36/Cys45. At 32–429 (CPANCVCSKT…TVTHKPEEDT (398 aa)) the chain is on the extracellular side. Asn68, Asn72, and Asn79 each carry an N-linked (GlcNAc...) asparagine glycan. 2 LRR repeats span residues 104–125 (GLQK…AFAK) and 128–149 (HLRY…LFQT). Residues Asn133 and Asn163 are each glycosylated (N-linked (GlcNAc...) asparagine). An LRRCT domain is found at 160–209 (NFFNCSCDIRWMQLWQEQGEARLNSQNLYCINADGSQLPLFRMNISQCDL). Disulfide bonds link Cys164/Cys189 and Cys166/Cys207. N-linked (GlcNAc...) asparagine glycosylation is found at Asn203, Asn218, Asn232, Asn259, Asn267, Asn272, and Asn294. Ig-like C2-type domains are found at residues 210 to 300 (PEIS…VALT) and 309 to 382 (SLEE…IAKN). Residues Cys231 and Cys284 are joined by a disulfide bond. A disulfide bridge connects residues Cys320 and Cys362. Asn375 and Asn388 each carry an N-linked (GlcNAc...) asparagine glycan. Residues 430–453 (FGVSIAVGLAAFACVLLVVLFIMI) traverse the membrane as a helical segment. Residues 454–825 (NKYGRRSKFG…ATPIYLDILG (372 aa)) are Cytoplasmic-facing. Phosphoserine is present on Ser493. Tyr516 bears the Phosphotyrosine; by autocatalysis mark. The 288-residue stretch at 538-825 (IVLKRELGEG…ATPIYLDILG (288 aa)) folds into the Protein kinase domain. ATP contacts are provided by residues 544–552 (LGEGAFGKV) and Lys572. Residue Asp679 is the Proton acceptor of the active site. Phosphotyrosine; by autocatalysis occurs at positions 705, 709, and 710.

The protein belongs to the protein kinase superfamily. Tyr protein kinase family. Insulin receptor subfamily. In terms of assembly, exists in a dynamic equilibrium between monomeric (low affinity) and dimeric (high affinity) structures. Binds SH2B2. Interacts with SQSTM1 and KIDINS220. Interacts with PTPRS. Interacts with MAPK8IP3/JIP3. Post-translationally, ligand-mediated auto-phosphorylation.

The protein resides in the membrane. It carries out the reaction L-tyrosyl-[protein] + ATP = O-phospho-L-tyrosyl-[protein] + ADP + H(+). Functionally, receptor tyrosine kinase involved in nervous system and probably heart development. Upon binding of its ligand NTF3/neurotrophin-3, NTRK3 autophosphorylates and activates different signaling pathways, including the phosphatidylinositol 3-kinase/AKT and the MAPK pathways, that control cell survival and differentiation. This chain is NT-3 growth factor receptor (NTRK3), found in Saimiri boliviensis boliviensis (Bolivian squirrel monkey).